Consider the following 47-residue polypeptide: Defensin-like protein 1 (47 aa).

Intrachain disulfides connect C3/C47, C14/C36, C20/C41, and C24/C43.

It belongs to the DEFL family. Protease inhibitor I18 (RTI/MTI-2) subfamily.

This chain is Defensin-like protein 1, found in Sorghum bicolor (Sorghum).